Here is a 264-residue protein sequence, read N- to C-terminus: 3-methyl-2-oxobutanoate hydroxymethyltransferase (264 aa).

2 residues coordinate Mg(2+): Asp-45 and Asp-84. 3-methyl-2-oxobutanoate-binding positions include 45–46 (DS), Asp-84, and Lys-112. Glu-114 contributes to the Mg(2+) binding site. Glu-181 serves as the catalytic Proton acceptor.

It belongs to the PanB family. In terms of assembly, homodecamer; pentamer of dimers. It depends on Mg(2+) as a cofactor.

The protein resides in the cytoplasm. The enzyme catalyses 3-methyl-2-oxobutanoate + (6R)-5,10-methylene-5,6,7,8-tetrahydrofolate + H2O = 2-dehydropantoate + (6S)-5,6,7,8-tetrahydrofolate. The protein operates within cofactor biosynthesis; (R)-pantothenate biosynthesis; (R)-pantoate from 3-methyl-2-oxobutanoate: step 1/2. Functionally, catalyzes the reversible reaction in which hydroxymethyl group from 5,10-methylenetetrahydrofolate is transferred onto alpha-ketoisovalerate to form ketopantoate. The chain is 3-methyl-2-oxobutanoate hydroxymethyltransferase from Cronobacter sakazakii (strain ATCC BAA-894) (Enterobacter sakazakii).